The chain runs to 124 residues: Fluoride-specific ion channel FluC (124 aa).

4 helical membrane passes run 1-21, 38-58, 69-89, and 99-119; these read MVPL…LRFA, TLAV…LFLI, GLMV…LDTV, and LALG…WAGL. Gly76 and Thr79 together coordinate Na(+).

This sequence belongs to the fluoride channel Fluc/FEX (TC 1.A.43) family.

It localises to the cell inner membrane. It carries out the reaction fluoride(in) = fluoride(out). Its activity is regulated as follows. Na(+) is not transported, but it plays an essential structural role and its presence is essential for fluoride channel function. Functionally, fluoride-specific ion channel. Important for reducing fluoride concentration in the cell, thus reducing its toxicity. This chain is Fluoride-specific ion channel FluC, found in Pseudomonas fluorescens (strain Pf0-1).